Here is a 98-residue protein sequence, read N- to C-terminus: Protein FAM24A (98 aa).

The first 29 residues, Met-1–Cys-29, serve as a signal peptide directing secretion.

This sequence belongs to the FAM24 family.

Its subcellular location is the secreted. This is Protein FAM24A (Fam24a) from Mus musculus (Mouse).